A 228-amino-acid chain; its full sequence is Aquaporin Z 1 (228 aa).

Helical transmembrane passes span 9–29 (FLGT…AAAF) and 34–54 (IGLL…AYAV). The NPA 1 signature appears at 63-65 (NPA). Transmembrane regions (helical) follow at residues 82-102 (VGYI…LYVI), 129-149 (LTAA…IILG), and 156-176 (PVGF…LVSI). The NPA 2 motif lies at 184–186 (NPA). A helical membrane pass occupies residues 204-224 (WLFWVAPLIGAVIAGIVWKIV).

The protein belongs to the MIP/aquaporin (TC 1.A.8) family. As to quaternary structure, homotetramer.

The protein localises to the cell inner membrane. The catalysed reaction is H2O(in) = H2O(out). In terms of biological role, channel that permits osmotically driven movement of water in both directions. It is involved in the osmoregulation and in the maintenance of cell turgor during volume expansion in rapidly growing cells. It mediates rapid entry or exit of water in response to abrupt changes in osmolarity. In Rhizobium meliloti (strain 1021) (Ensifer meliloti), this protein is Aquaporin Z 1.